The chain runs to 87 residues: Antitoxin epsilon (87 aa).

It belongs to the epsilon antitoxin family. In the presence of the zeta toxin, forms an inactive PezA(2)PezT(2) heterotetramer.

Functionally, antitoxin component of a type II toxin-antitoxin (TA) system. Neutralizes the toxic effect of cognate zeta toxin. Part of a postsegregational killing (PSK) system involved in the killing of plasmid-free cells. Continuous synthesis of the epsilon antitoxin is required to counteract the zeta toxin. The chain is Antitoxin epsilon from Lactococcus lactis subsp. lactis (Streptococcus lactis).